We begin with the raw amino-acid sequence, 373 residues long: MVGIDTGGKIPPEIMRQATEKTAQLAPLEGGHIYSILKQTLEKLALVGQLQVDPKVQAHELTQSVGEEISRMITEQKKLESRFEELVALQHVLRHQPNKTKLMENQVASERQALQLLLSNCLNEIEVFGKVQPLVESVMAQQAAEQAMKETIEREKNTTAAVRQLRNDLREEKLDHEEKMKEKKKGLSTLKEQLKALKMDTAVSTRYLSKDLTAGNEHERRLQRTQLEDLLKDLGLVQQQIDIEKAVHATQAEFLRQIAAKMADDSSNWASRHDGDLAAREKELEMLKQQHARDLIELKKAEEKFKMEQALKKEREMKATEERERAEFEEMRETRRAQAAVIIQAWWRGHKVRMVMSGGGKKGAKKGGAKKKK.

A coiled-coil region spans residues 145–200; the sequence is EQAMKETIEREKNTTAAVRQLRNDLREEKLDHEEKMKEKKKGLSTLKEQLKALKMD. The region spanning 336 to 365 is the IQ domain; it reads RAQAAVIIQAWWRGHKVRMVMSGGGKKGAK.

It belongs to the DRC9 family. Component of the nexin-dynein regulatory complex (N-DRC).

It is found in the cytoplasm. It localises to the cytoskeleton. The protein resides in the flagellum axoneme. Its function is as follows. Component of the nexin-dynein regulatory complex (N-DRC), a key regulator of ciliary/flagellar motility which maintains the alignment and integrity of the distal axoneme and regulates microtubule sliding in motile axonemes. This is Dynein regulatory complex protein 9 from Chlamydomonas reinhardtii (Chlamydomonas smithii).